Here is a 145-residue protein sequence, read N- to C-terminus: D-aminoacyl-tRNA deacylase (145 aa).

A Gly-cisPro motif, important for rejection of L-amino acids motif is present at residues 137–138 (GP).

Belongs to the DTD family. Homodimer.

Its subcellular location is the cytoplasm. The enzyme catalyses glycyl-tRNA(Ala) + H2O = tRNA(Ala) + glycine + H(+). The catalysed reaction is a D-aminoacyl-tRNA + H2O = a tRNA + a D-alpha-amino acid + H(+). In terms of biological role, an aminoacyl-tRNA editing enzyme that deacylates mischarged D-aminoacyl-tRNAs. Also deacylates mischarged glycyl-tRNA(Ala), protecting cells against glycine mischarging by AlaRS. Acts via tRNA-based rather than protein-based catalysis; rejects L-amino acids rather than detecting D-amino acids in the active site. By recycling D-aminoacyl-tRNA to D-amino acids and free tRNA molecules, this enzyme counteracts the toxicity associated with the formation of D-aminoacyl-tRNA entities in vivo and helps enforce protein L-homochirality. This chain is D-aminoacyl-tRNA deacylase, found in Colwellia psychrerythraea (strain 34H / ATCC BAA-681) (Vibrio psychroerythus).